A 391-amino-acid chain; its full sequence is Chorismate synthase (391 aa).

Residue Arg48 participates in NADP(+) binding. Residues 126–128 (RAS), Gly286, 301–305 (KPTSS), and Arg328 each bind FMN.

This sequence belongs to the chorismate synthase family. It depends on FMNH2 as a cofactor.

It carries out the reaction 5-O-(1-carboxyvinyl)-3-phosphoshikimate = chorismate + phosphate. It participates in metabolic intermediate biosynthesis; chorismate biosynthesis; chorismate from D-erythrose 4-phosphate and phosphoenolpyruvate: step 7/7. Catalyzes the anti-1,4-elimination of the C-3 phosphate and the C-6 proR hydrogen from 5-enolpyruvylshikimate-3-phosphate (EPSP) to yield chorismate, which is the branch point compound that serves as the starting substrate for the three terminal pathways of aromatic amino acid biosynthesis. This reaction introduces a second double bond into the aromatic ring system. The polypeptide is Chorismate synthase (Saccharolobus islandicus (strain L.S.2.15 / Lassen #1) (Sulfolobus islandicus)).